Here is a 465-residue protein sequence, read N- to C-terminus: Pre-mRNA-splicing factor URN1 (465 aa).

Residues 1–32 (MRGEWQEFKTPAGKKYYYNKNTKQSRWEKPNL) form the WW domain. 3 disordered regions span residues 28–49 (EKPNLKKGSNLESNAKESQTER), 144–198 (ERKD…VNQD), and 266–288 (ERSGNATAEESDSEDNSEDDSEV). Ser-150 carries the post-translational modification Phosphoserine. Polar residues predominate over residues 160–175 (LQESHTGLVSGYGSSS). Positions 176–192 (GEEDEEEDEEEDEENEE) are enriched in acidic residues. An FF domain is found at 212–266 (DIDERNIFFELFDRYKLDKFSTWSLQSKKIENDPDFYKIRDDTVRESLFEEWCGE). Over residues 274 to 288 (EESDSEDNSEDDSEV) the composition is skewed to acidic residues.

Component of the precatalytic spliceosomal complex B. Interacts with PRP19.

It localises to the nucleus. In terms of biological role, component of the spliceosome involved in mRNA processing. The protein is Pre-mRNA-splicing factor URN1 (URN1) of Saccharomyces cerevisiae (strain ATCC 204508 / S288c) (Baker's yeast).